A 534-amino-acid chain; its full sequence is Echilunin cytochrome P450 monooxygenase (534 aa).

Residues 18-38 (VSPAALSWAVVAIYLGTFFWL) traverse the membrane as a helical segment. Cysteine 441 is a heme binding site.

It belongs to the cytochrome P450 family. Heme is required as a cofactor.

The protein localises to the membrane. The enzyme catalyses preechinulin + reduced [NADPH--hemoprotein reductase] + O2 = neoechinulin A + oxidized [NADPH--hemoprotein reductase] + 2 H2O + H(+). Its pathway is secondary metabolite biosynthesis. It functions in the pathway alkaloid biosynthesis. Functionally, cytochrome P450 monooxygenase; part of the gene cluster that mediates the biosynthesis of echinulin family alkaloid. The pathway begins with the biosynthesis of the cyclic dipeptide cyclo-L-Trp-L-Ala (cyclo-TA) by the NRPS echPS via condensation of L-alanine and L-tryptophan. The prenyltransferase echPT1 then catalyzes the first prenylation step, a reverse prenylation reaction at C2, to yield preechinulin. Preechinulin is the substrate of the cytochrome P450 monooxygenase echP450 that catalyzes the formation of the double bond between C10 and C11 to produce neoechulin A. The unique prenyltransferase echPT2 functions as a competitive enzyme with echP450 for preechinulin metabolization and uses preechinulin for effective regiospecific prenylations. Preechinulin is prenylated by echPT2 at C5 or C7. C7-prenylation leads to accumulation of tardioxopiperazine B without further modification by echPT2. In contrast, the C5-prenylated tardioxopiperazine A can be prenylated again by echPT2, predominantly at C7 to form echinulin or less frequently at C4 to give variecolorin L. EchPT2 also accepts neoechilunin A to produce varlecolorin G (prenylation at C5) or isoechinulin A (prenylation at C7). EchPT2 further converts isoechinulin A into dehydroechinulin. Moreover, a yet unidentified enzyme can also convert neoechilunin A into neoechilunin B by introducing a double bond between positions C14 and C17 and thus provides a further substrate to echPT2 for C5 and C7 prenylation. The sequence is that of Echilunin cytochrome P450 monooxygenase from Aspergillus ruber (strain CBS 135680).